A 581-amino-acid polypeptide reads, in one-letter code: 2-isopropylmalate synthase (581 aa).

In terms of domain architecture, Pyruvate carboxyltransferase spans 32–306; that stretch reads PQWCAVDLRD…DPQLDFSDIK (275 aa). Mg(2+)-binding residues include Asp-41, His-245, His-247, and Asn-281. Residues 455-581 form a regulatory domain region; that stretch reads RSAPVEQIAL…KHQQLQNGGV (127 aa).

This sequence belongs to the alpha-IPM synthase/homocitrate synthase family. LeuA type 2 subfamily. Homodimer. Mg(2+) is required as a cofactor.

The protein localises to the cytoplasm. The catalysed reaction is 3-methyl-2-oxobutanoate + acetyl-CoA + H2O = (2S)-2-isopropylmalate + CoA + H(+). The protein operates within amino-acid biosynthesis; L-leucine biosynthesis; L-leucine from 3-methyl-2-oxobutanoate: step 1/4. Catalyzes the condensation of the acetyl group of acetyl-CoA with 3-methyl-2-oxobutanoate (2-ketoisovalerate) to form 3-carboxy-3-hydroxy-4-methylpentanoate (2-isopropylmalate). The chain is 2-isopropylmalate synthase from Corynebacterium efficiens (strain DSM 44549 / YS-314 / AJ 12310 / JCM 11189 / NBRC 100395).